Reading from the N-terminus, the 7311-residue chain is NQPAYCDFEKDNWCTWTNSDKEDDFDWLLGSGSTPSVYTGPSNDHTTGLGIGKYMFIETSSPRKSGDKARFYSERLSPTSLRGRCVKFWYHMYGSSIGTLKVFVKTGAGNRSESLVWSLSGNQRNRWNFGQVTIASYRSAYQIVFEGIRGNSYRGDIAIDDITYTVGSCVTLPRGAVPTTPPTTVRPTTSPTVPPKGALDCDFERGFCSWVQDSSDKFNWTRQSRGTASSNTGPSADHTLKNATGYYAYIEASFPRRANDTARLISPLIPANSRPGMCISFWYHMYGPHIDTLNVYTKVGSSLGSAIWKKTGNQGNKWRYGQVFVRMVLNFQIVFEGVRGRSYQGDIAIDDVTVRNGFCSPLKQCTFEDAGMCGWRNEKSAGVDDFDWTRQSGATSSSGTGPTFDHTLGTARGFYMYIETSFPRKQGDKAQLLSPSYPSTSGKCLRFWYHMYGNHIGTLNIRIKQMVLGRPTYFLQWSRSGDHGNNWRVAQVTIRSGSQFQVVFEGIRGSGYQGDIAIDDVELKDNVCPPPGDCNFETGTCNWVNVQNTDNFDWLRGRGSTPSSFTGPSVDHTTNSSSGYYMFIETSSPRRIGDKARFESEEFQPTGSSGRCLKFWYHMYGSSVRGLNVWMSSNGSTGQIWTLSGNQRQDKWFYAQAPVRSANVYQVIFEGVRGLSYAGDIAIDDVQFIVGNCPVLPSKAKPLNPWTPRPVPTVAPTNSTTPAPSIYDCTFEQSMCTWTQALDDSFNWTRTKGRTPSRFTGPVSDHTTGGSAGYYVYIETSSPRKANETARIESVTIPATQQKCLQFWYHMYGPHVDTLNVYTKINNQLGVPVWTLNGTQGNKWRHAVVSLTVSSKFKVVFEGRRGVSWAGDIALDDISFQDGQCPVQMQCSFENPNLCGWSNVQGDNFDWTRSNGYTSSSGTGPSVDHTSGTSNGYYMYIETSSPRSRGHKAWFVSSPFKATNGRCLQFWYHMYGATIGALNVLLLQNRTRSAPIWNLSGNQGNLWRMAQVTLKSPTDFKVIFEGVTGTSYTGDIAIDDVEIMDGACPLPGDCTFEKGTCTWVNSLNVVDDEFDWTRGSGGTPSSFTGPSTDHTTGTKNGNYMFIETSFPRKRGDRARLESEVFPPTTSTGRCMSFWYHMMGGHIGTLNVYMKIYGQSETKLWSMTLDQGNNWNSARVPIVSGNRYYQIILEGVRGSSYQGDIAIDDISFVATARRCRLSPSNAVPFDCNFELGTCSWTQSFRDQFHWTRHQGSTGSFLTGPSIDHTTATNKGWYIYIETSGPRRPNDTARIVSPTIAGNGTVKVIRCVSFWYHMYGPHVDELRLYKKEGFSLGKPQWVRQGDQGNKWIKGEYTVEHTNGIQIVFEGVRGVSYRGDIALDDISLKDGSCPSSGMCSFEAPDICGYTQDHDTDQFDWSRSNGPTASFSTGPAADHTYGTLFGHFMYTEVSPSSITQGSKARLLSPRYPATRGSCLQFWYHMYGQTIGTLNVYTRRSSWSLNKVWSKTGNDTNIWNVAQVTIRSPFAYQIVFEGVKGRSYTGDIAIDDVKIMSGSCPAPGDCSFEKGFCTWANTRQVDTFDWIIGGGTTSSFGTGPSGDHTTGSGQYVFIETSAPRQHGDNAYLLSQPFDPAPSGRCLKFWHHMRGASIGTLNVYLHTGNFSAMQLLWQRNGNKGSTWMIGQTPITSSVKYQVVFEGIRGNSFTGDIALDDISFTVGAANCIQRPYDSLPPGVTTSAPTLSTSSSVAPTTIGNIGNDCNFDVGICKWTFASYGQFNWTRHQGSTASSGTGPKYDHTRGNSGQGYYMYIETSVPRRPNDTAGLVSPKVQKVGSFACVIFWYHMFGPHINQLNVYFKDGSKAKTLMWQKIGSQADEWRQGLLQLSPSQGSYQVIFEGVRGTSYQGDISLDDISFQNNKCPSSTDCTFEYFLGSISNTCGWTQDGSDDFDWTRTSGGTPSHATGPSADHTYGTSQGYYMHIETSYPRRRGDKARLISPVYRPVRGGQCFQFWYHMYGSDIDRLNVYIKTGSNISIPVWSRSGNRGDLWKISQVPVTTTVNFNIVIEGIAGRSFRGDIAIDDLKLIKSPCPLPGDCDFESGMCTYDNTQAEDQFDWLRNAGATPSWRTGPSVDHTLGTGFGHYMYIETSSPRRQGDKARLMSEDFNPTTSSGRCVRFWYHLYGNAIGTLRVLVKTGPGNQSETAIWELSGNFGNQWYSAQAPVSSAKVYQVVFEGVRGRGVSGDIAIDDITFATTRCSVVPSLAVPPTPPPTTPPPVINNCTFEGGFCSWKNLRGDNFDWTRSRGATSSWRTGPTTDHTLGTRAGYYVYIETSFPRRSKDKAWLQSGLIQPTTVTNGRCLKFWYHMWGTHVDTLNVYRKVGSSPNVRIWFRRGTQGNKWRFAQVNLLSNQPFYVIFEGVRGLSYQGDIALDDLDIADGPCPPLTVCDFETDMCKWTNIAIGDQFDWKRDSGGTPSAGTGPSRDHTTGTRNGMYMYIETSLPRRQGDKAYFISPRYDAAPNGKCFKFWYHMYGRHIGKLNIYVKAGPALGAMVWNETGNQGNFWLHGKAPVKISTQFQIVIEGIRGASYAGDIALDDFSLDDSPCPPEGSCDFEEKSFCSWLNVPNGNKSLGLDDFDWTLGSGSTPSWQTGPSTDHTTGSSLGTYAFIETSNPRRAGHIARIRSKTFSATNGKCMSWWFHMYGRSVGSLNVYIKKGGSPESLLWNTKGNQGNVWKKTEVTITSKSDFQIIFEGVSGAGFQGDIAIDDIDFADKYCVGLCSSVNPQQRVDCSGGLGISKTTCVNLRRCCWDDSVPNVPVCFYHPSACASVIPANRRTCGFSGISSSQCRTRGCCWDNSLSNVPWCFHGPARPTDFPTQPPPPTTLPPSKWDCTFESGFCNWNNSQEDDFNWSRQSGGSPSIGTGPTSDHTTGSLRGYYVYIETSYGSANDTAVLESAMVPATIRKPSGMICLQFWYHMRGQHVDTLNVFVKPGNQLPSSPTWTKSGTQGTQWRLGQVAVSSRAPFQFVFQGIRGKGYQGDIALDDIRVLDGTCPPSRECDFESPNLCNFTQDTGDIFDWSRGSGNTISVGTGPSYDHTYKTASGYYMYIETSAPRRTGDYARIESISYDQTVGNGRCLVFWHHMYGGGIGRLNVYIKRGNSLGTPVWRKNGNHGNKWWRGMVTVRSPNQKWKVVFEGIRGRGGRGDIAIDDIIVKDQPCPPPGSCDFESGWCAYQNDLTGDDFDWERNTGHTSSIGTGPSVDHTTGSPQGHYVYIESSYPRTKGDVARLTSDLFEVSKGYAWCLSFWYHMYGNSVGSLSVKITIYPFRKDKPYTRLLWTQQLNHGDVWLTDTVQINSPDDFEIVFEAVVGSSYDADIAIDDIVVTAGFCPSPKPTVAPNPCAVRCKSNNKCVSSTQLCDFVNDCGRGDNSDEKNCGACTFEQDLCGWNDTSKGAFKWNKDRGGTPSSNTGPTIDHTLGTALGYYMYVEASQGRIRDMAQLESPWLKQSASTCVVSFWYHMYGRGIGRLYGYIKVGLTYTRLFQQSGNKGNNWLQGKLYVGRRFAPFKIIFEAERSYNVFGDVAVDDVSFVNCTLPPIVSSCGQQHRCIRGSCIDRGRVCDYTDDCGDNSDEQNCYNFKYRCSFEKSLCQWTQLKDEEFDWTRNQGVTASYNTGPMFDHTLGTAAGYYLYAEASYPRKKGDKARLASGFITTPGDDSCKLRLYFHMFGSGIGSLNVYTRPCNGCAETLVYTRSGNLGNFWERAEVALMSRVPFQVIIESVRGVSYLGDIAIDDLSMTSSCQSYRGPLPTAPPPTTAIPTPPPCPRFQFKCSNGLCIDTWNVCNYRDDCGDGSDEVNCGSCSFEPGLCGYQDVSLTLYQWSRNRGTTVVPRTGPSVDHTCGNASCFYAYVHSGAGSFFDDAILQSRNMTKTGPGCVVSFYYHMYSRLSAGFTGTLYLRLKYKGTTSNLFEVYGNNGDKWKRAEVGLGSLDAGFSIQFVASKFVTAADIAVDDVTFQGCALPPIRSCISGEYRCTRGSCVLPSQLCDFSDDCGDMSDENPSTCASYKERCNFEQDLCSWTQDTDDDFDWTKDSGGTPSSWTGPGRDHTKGSSKGFYMYIETSSPRKSNESARMSSMTFRPSSRNDSCYMRFWYHMFGKDVDTLSIKLRISMIGPLIPLWNRTGEQGDMWRRAEIHLASNVNFQVVIEGLSGPGFQGDIAIDDVSFTPNCRPDSTASISTTIPTGPPIPGCQPGKFKCANGGNCISVSKVCNFYSDCSGGSDEMNCPATCNFQNSFCKWQNAKSVDHYDWVRNKGQTPSRFTGPSVDHTTNSSAGYYIYTEVSNRTGFFADAHLVSPLFRQAGKNCQFKFWYHMFGPNIGFLQVFYRRNSRDQQLFSVFGNKGNKWNQGTVDIPKCANDFRIVIMAKHYSGGALGDIAVDDVSFEHCAESPPSQTCSGLSVFRCQSGHCIAMSGKCDFEPDCCDGSEETNIVCAKYNRCNFEAGLCDWTQLANDTFNWRMQSGRTGSHRTGPSLDHTTRSRNGRYMYIEASSPRKPGDSAILGSAVFKPTGSCKLRFFYHMYGSHIGHLNVSIRTSTNGPSTVLWTKSGDQGDKWTRATVSISVSKNFQVLIEGVVGSSYRGDIAIDDISFTPDCVVGGTIPGLPPPPPTPTQPSCFNCRDGSACVNISKTCDFHNDCTDKSDEDADLCGWPCDFQRGTCSWTNSNRDNFDWTRHKGCTASVSTGPCVDADNRTSGYYMYIETSTGLIGNKAVLVSPRYQQAYSTAQLSFWYHMYGRTIGRLSVYLNDGINRTRMWTLYGNQGDQWYQTFISLGRRRTPFTIEFEALRGSSWSGDIAIDSISMNNYTLTYCSGQLPPTKWRCRNGACVDANALCDFSDDCGDNSDEQSCSNYFSRCTFENGLCDWFQGSGDEIDWIRNKGPTPSFSTGPSRDHTLGTVEGYYLYMEATGQKFGDRARLASNNLMGKCNLRMFYHMHGIHVNSLAVYMRTKLNGPLRVVANMSGSVGDNWIRSEVNVTNGDQPFQIVIEGVRGRGYRGDIAIDDLSIAMKPSCQQFFGSLPWLGSTVKPITTVAPNNCVLPQVPCVSDGKCVSPSQVCDFNLDCADASDERSCPHMCTFESDQCGWVNTVKDNFDWSRKRGRTPSFGTGPSVDHTTGTNQGYYMYIETSYGRIGDRARLISPQFKKSHSNCKMVFWYHMYGSSIGSLSVYLNVSSNTKLWWRKYGYQGNQWYRGVVGIGKRSNAFQIIFLGIRGRSYSGDIAIDDIKFVDCALPPVARSCPSQFTCARNSCVSNDYVCDFNDDCGDGSDETLCGAYTTRCDFSRGSCDWTQSNEDDFNWLRRKGATSSFNTGPPSDHTSQTGYYMYIETSWPRRYGDKAWLVSRNFQEMTPGSESCKLRFFYHMFGDSAESLNVYIRTYRNGSALQRVWGVKGSRGAIWNRAVITLSSRKNFQVLIEGIRGDSYTGDIGIDDVSFTTGCKQFSGNLPVAPPISPTSNPATTKPHQCTTAEFNCFNQGSGACIPSTQVCNFQPNCNDGVDEQNCAKTKCSFDGGDFCNWYVNNPSRTRRALAYTWLAQQGATGSSGTGPTKDHTTGTLSGWYIYAESSGGSNDDRAPLTTPLIGQTGPECTLLFWYHMFGVSVGTLSVKLSFLDGTQSVMWSKSGSQGNRWRQSKLMIGSRQLFKVTFEARRSYGYKGDIALDDIEFLNCVPLDLTKKCTADEFQCARGGCIPKTSVCDFKADCMVGDVSDESSCSAYRSGQCDFEHGLCLYSQSSDDKFDWTVKTGGTFSYNTGPTIDHTTKSKKGHYMYIETSWPRRNGDNARLNSPILKSTSSNCYLRFFYHMKGNHIGNLSVFSRTGYSVGDLSGPLLNITGAQGDFWNRSMVKAPVSSNDFQFVIEGVRGNGYQGDIAIDDVSLTPGCQICTDCTLPGQPTSTPFGFHTRPTGTPCSLQQYVCKNLRCVDKAQICNFKDDCGDNSDELPCGSNCTFEGDCYRGWRQSTGSSNFHWRRRNGKTPSVGTGPTNDHTFGNQNGYYMYIETSNGSPGDKAELASYRYFASSPNCRMSLWYHMFGTGVGSLEVKLKKSDGTYEILGNALTGSQGNAWKKYTLNIGANKNFEILIVAARGINWQGDIAIDDISFTDNCFVDLNRTCTPNEVKCRTSGHCVAEQRVCDHVKDCNDGTDEDALICSNRTASCDFDVNWCQWDNYWVDDFNWLRASAIGTPNTGPRADHTTGKGYFLYIDSSKPRQLFDKARLVHPNVFPSGRGVCTLRFYYNMYGSQNMGYLNVYLVYSGYSQWTQVWRTRGDPANRLWVRAEIQLNSQSSFRVGFEGIVGGGDKTDIALDDISFSAGCYKGGSPPLPTGSARCSKVQFYCKADDLCINIHWKCDGEKDCTDGADEMLCPSPTKQPTPPPGLTHPANCNFESGFCLWRSAFFADMNWLRNRGQTPSRQTGPDGDHTTGTGYYVYAEATGHYMNQFGELLGPNMMPSSTCKVYFCYLMHGKDMGTLNVYQRFPSDKKPDQTQKRKWSQSLDFGKKWRCVYVPLPSTRQFSVVFEAIRGKGYRSDIALDDIKFVNCAKLGPTQKPTPAPRGTILDEDFEDCISCWMNEKNGHDQMDWVIGRGETSSLNTGPSYDHTRKTIYGRYLYIDVYSASHIQGWVHADLESRLMVVQRRCYMTFWYHMYGAGMGSLWIVAYVYDDPKNLNDWREVSLWYSYGNQGNKWTSGKVNLFNHLTASKTSRVVISGIRGSDYTGDIAIDDIKFHNCDFKDDKTPCGEVFDRCNDRPIPKPTLGPASGDCTFESGLCHWNNTIVNDMPWFLRKGKTGSQYTGPAVDHTLGTPDGYYVHIEASWYTRGSVAILEGPYTLPTQNCEMKFYYHMFGGDCGSLLVYINSGDSVKLVFNKTGEQGKDWLGASVQLKSDYAFRIHITATRGSSYKGDIAIDDISFKGQCQFTSNAALRYGDKLLTTGCADGGREGFFSHPSVAGCKGRWSRPESLRAKPTSGAKCGDDIGLWGRSCSQPAELCATGWHICGSYGVREIVNRTNGIDCQEAGYGKFSAGINHCMQNNAGGDGCKRVVTDIDYGCGKYYDSCSEPLCCGSNCQGPDICDSGVFRAATRYSASSEHLEGCSFISSDNAGGIMCCKDDATTPTPAPTMPPVPGSCNFETGLCGWIVDSSTALSFGLGQGETVTRNTGPRYDNTKKDMTGTYLSMPAVNGKPNDIARVSHHFSNVTQSYCQINFFYHMYGAGMGSLRVFVELDGGGKKKVWEKTGNQGDGWLRGAQNFSGADQEDDCIYNNL.

MAM domains follow at residues 4-171, 199-361, 363-530, 532-695, 727-887, 889-1050, 1052-1220, 1228-1392, 1394-1557, 1559-1722, 1755-1918, 1920-2087, 2089-2254, 2274-2437, 2439-2601, and 2603-2771; these read AYCD…SCVT, LDCD…FCSP, KQCT…VCPP, GDCN…NCPV, YDCT…QCPV, MQCS…ACPL, GDCT…RCRL, FDCN…SCPS, GMCS…SCPA, GDCS…NCIQ, NDCN…KCPS, TDCT…PCPL, GDCD…RCSV, NNCT…PCPP, TVCD…PCPP, and GSCD…YCVG. A disordered region spans residues 2461–2481; it reads WKRDSGGTPSAGTGPSRDHTT. Over residues 2466-2475 the composition is skewed to low complexity; sequence GGTPSAGTGP. 2 consecutive P-type domains span residues 2771-2817 and 2818-2862; these read GLCS…FYHP and SACA…FHGP. 6 cysteine pairs are disulfide-bonded: Cys2773–Cys2802, Cys2784–Cys2801, Cys2795–Cys2813, Cys2820–Cys2847, Cys2831–Cys2846, and Cys2841–Cys2858. 4 MAM domains span residues 2883-3048, 3050-3214, 3216-3384, and 3429-3587; these read WDCT…TCPP, RECD…PCPP, GSCD…FCPS, and GACT…NCTL. The LDL-receptor class A 1 domain occupies 3593-3628; the sequence is SCGQQHRCIRGSCIDRGRVCDYTDDCGDNSDEQNCY. Intrachain disulfides connect Cys3594/Cys3605, Cys3600/Cys3618, and Cys3612/Cys3627. Residues 3632 to 3794 enclose the MAM 21 domain; sequence YRCSFEKSLC…DLSMTSSCQS (163 aa). LDL-receptor class A domains lie at 3814-3850 and 4016-4054; these read PCPRFQFKCSNGLCIDTWNVCNYRDDCGDGSDEVNCG and SCISGEYRCTRGSCVLPSQLCDFSDDCGDMSDENPSTCA. Intrachain disulfides connect Cys3815–Cys3827, Cys3822–Cys3840, and Cys3834–Cys3849. The region spanning 3850–4011 is the MAM 22 domain; sequence GSCSFEPGLC…DDVTFQGCAL (162 aa). 3 disulfide bridges follow: Cys4017-Cys4029, Cys4024-Cys4042, and Cys4036-Cys4053. The MAM 23 domain maps to 4058-4221; the sequence is ERCNFEQDLC…DVSFTPNCRP (164 aa). The 38-residue stretch at 4239-4276 folds into the LDL-receptor class A 4 domain; it reads GCQPGKFKCANGGNCISVSKVCNFYSDCSGGSDEMNCP. Disulfide bonds link Cys4240-Cys4253, Cys4247-Cys4266, and Cys4260-Cys4275. The MAM 24 domain maps to 4277-4438; that stretch reads ATCNFQNSFC…DDVSFEHCAE (162 aa). The LDL-receptor class A 5 domain occupies 4444-4483; that stretch reads TCSGLSVFRCQSGHCIAMSGKCDFEPDCCDGSEETNIVCA. 3 disulfides stabilise this stretch: Cys4445–Cys4458, Cys4453–Cys4471, and Cys4465–Cys4482. The 161-residue stretch at 4486 to 4646 folds into the MAM 25 domain; the sequence is NRCNFEAGLC…DISFTPDCVV (161 aa). 2 LDL-receptor class A domains span residues 4660 to 4699 and 4859 to 4899; these read PTQPSCFNCRDGSACVNISKTCDFHNDCTDKSDEDADLCG and YCSG…QSCS. Intrachain disulfides connect Cys4668-Cys4687, Cys4681-Cys4698, Cys4860-Cys4876, Cys4871-Cys4889, and Cys4883-Cys4898. The 163-residue stretch at 4700 to 4862 folds into the MAM 26 domain; it reads WPCDFQRGTC…NNYTLTYCSG (163 aa). Residues 4903–5063 enclose the MAM 27 domain; the sequence is SRCTFENGLC…SIAMKPSCQQ (161 aa). The LDL-receptor class A 8 domain maps to 5085–5122; sequence NCVLPQVPCVSDGKCVSPSQVCDFNLDCADASDERSCP. Intrachain disulfides connect Cys5086–Cys5099, Cys5093–Cys5112, and Cys5106–Cys5121. The MAM 28 domain maps to 5123-5281; it reads HMCTFESDQC…DDIKFVDCAL (159 aa). The LDL-receptor class A 9 domain maps to 5287–5322; that stretch reads SCPSQFTCARNSCVSNDYVCDFNDDCGDGSDETLCG. 3 disulfides stabilise this stretch: Cys5288/Cys5299, Cys5294/Cys5312, and Cys5306/Cys5321. In terms of domain architecture, MAM 29 spans 5326 to 5489; sequence TRCDFSRGSC…DVSFTTGCKQ (164 aa). The region spanning 5513–5552 is the LDL-receptor class A 10 domain; sequence QCTTAEFNCFNQGSGACIPSTQVCNFQPNCNDGVDEQNCA. Disulfide bonds link Cys5514/Cys5529, Cys5521/Cys5542, and Cys5536/Cys5551. The 166-residue stretch at 5554–5719 folds into the MAM 30 domain; the sequence is TKCSFDGGDF…DDIEFLNCVP (166 aa). In terms of domain architecture, LDL-receptor class A 11 spans 5725–5763; it reads KCTADEFQCARGGCIPKTSVCDFKADCMVGDVSDESSCS. Intrachain disulfides connect Cys5726–Cys5738, Cys5733–Cys5751, and Cys5745–Cys5762. One can recognise an MAM 31 domain in the interval 5768 to 5935; that stretch reads GQCDFEHGLC…LTPGCQICTD (168 aa). One can recognise an LDL-receptor class A 12 domain in the interval 5957 to 5993; it reads PCSLQQYVCKNLRCVDKAQICNFKDDCGDNSDELPCG. Cystine bridges form between Cys5958–Cys5970, Cys5965–Cys5983, and Cys5977–Cys5992. Residues 5994–6156 enclose the MAM 32 domain; it reads SNCTFEGDCY…DISFTDNCFV (163 aa). Residues 6014 to 6034 are disordered; that stretch reads NFHWRRRNGKTPSVGTGPTND. Positions 6023-6034 are enriched in polar residues; it reads KTPSVGTGPTND. One can recognise an LDL-receptor class A 13 domain in the interval 6161–6200; it reads TCTPNEVKCRTSGHCVAEQRVCDHVKDCNDGTDEDALICS. Cystine bridges form between Cys6162/Cys6175, Cys6169/Cys6188, and Cys6182/Cys6199. The MAM 33 domain occupies 6204–6365; that stretch reads ASCDFDVNWC…DISFSAGCYK (162 aa). The region spanning 6377–6414 is the LDL-receptor class A 14 domain; the sequence is RCSKVQFYCKADDLCINIHWKCDGEKDCTDGADEMLCP. Cystine bridges form between Cys6378–Cys6391, Cys6385–Cys6404, and Cys6398–Cys6413. MAM domains are found at residues 6430–6590, 6606–6779, 6808–6965, and 7173–7311; these read ANCN…NCAK, LDED…NCDF, GDCT…QCQF, and GSCN…YNNL.

Component of the acid-insoluble and acid-soluble organic matrix of the aragonitic skeleton (at protein level).

The protein resides in the secreted. This Acropora millepora (Staghorn coral) protein is MAM and LDL-receptor class A domain-containing protein 2.